We begin with the raw amino-acid sequence, 1008 residues long: Serine/threonine-protein kinase PRP4 homolog (1008 aa).

The disordered stretch occupies residues 1–103; it reads MAAAEAPSLR…PAKRTKLDDL (103 aa). The residue at position 2 (A2) is an N-acetylalanine. Phosphoserine is present on residues S8, S20, S23, and S32. Basic residues-rich tracts occupy residues 39–59 and 67–81; these read KHSRHKKKKHKHRSKHKKHKH and RKHKHKHKHKKHKRK. The segment covering 82 to 91 has biased composition (basic and acidic residues); that stretch reads EVADASDKEG. S87 and S93 each carry phosphoserine. K99 is subject to N6-acetyllysine; alternate. K99 participates in a covalent cross-link: Glycyl lysine isopeptide (Lys-Gly) (interchain with G-Cter in SUMO2); alternate. K111 participates in a covalent cross-link: Glycyl lysine isopeptide (Lys-Gly) (interchain with G-Cter in SUMO2). K117 is covalently cross-linked (Glycyl lysine isopeptide (Lys-Gly) (interchain with G-Cter in SUMO2); alternate). K117 participates in a covalent cross-link: Glycyl lysine isopeptide (Lys-Gly) (interchain with G-Cter in SUMO1); alternate. The residue at position 131 (S131) is a Phosphoserine. The residue at position 140 (Y140) is a Phosphotyrosine. Disordered stretches follow at residues 140–536 and 560–584; these read YESG…EDEE and SNLSVPSEPSSPQSSTRSRSPSPDD. S142, S144, and S166 each carry phosphoserine. Low complexity predominate over residues 157–168; it reads GNRSSTRSSSTK. Residues K170 and K177 each participate in a glycyl lysine isopeptide (Lys-Gly) (interchain with G-Cter in SUMO2) cross-link. Basic residues-rich tracts occupy residues 179 to 202 and 214 to 230; these read STKKRSKSRSKERTRHRSDKKKSK and RSKSKERKKSKSPSKRS. 7 positions are modified to phosphoserine: S239, S241, S257, S277, S283, S292, and S294. A compositionally biased stretch (basic and acidic residues) spans 247–270; that stretch reads RSQEKVGKARSPVDDKAKVEDKSK. A compositionally biased stretch (basic residues) spans 302 to 315; that stretch reads SKDRRSRSKERKSK. The span at 316–325 shows a compositional bias: basic and acidic residues; it reads RPEADKEKKP. 5 positions are modified to phosphoserine: S328, S354, S356, S366, and S368. Residues 342–367 show a composition bias toward basic residues; the sequence is PSRRPGRSPKRRSLSPKQRDKSRRSR. T385 carries the phosphothreonine modification. At S387 the chain carries Phosphoserine. Basic and acidic residues-rich tracts occupy residues 395 to 408 and 415 to 429; these read RSLERKRREPERRR and RPRDDILSRRERSKD. Phosphoserine is present on residues S427, S431, and S437. The span at 438-498 shows a compositional bias: basic residues; sequence PARRRASRSP…RGGRRRRSRS (61 aa). Phosphoserine is present on residues S519, S520, S521, S566, S570, S577, S579, and S581. The segment covering 519–536 has biased composition (acidic residues); the sequence is SSSDDNLEDFDVEEEDEE. The span at 563–582 shows a compositional bias: low complexity; sequence SVPSEPSSPQSSTRSRSPSP. Glycyl lysine isopeptide (Lys-Gly) (interchain with G-Cter in SUMO2) cross-links involve residues K594 and K660. The Protein kinase domain maps to 688–1004; sequence YNVYGYTGQG…INQALQHAFI (317 aa). ATP contacts are provided by residues 694–702 and K718; that span reads TGQGVFSNV. At K718 the chain carries N6-acetyllysine. Catalysis depends on D816, which acts as the Proton acceptor. Phosphotyrosine is present on Y850. A Phosphoserine modification is found at S853.

The protein belongs to the protein kinase superfamily. CMGC Ser/Thr protein kinase family. In terms of assembly, interacts with CLK1 C-terminus. Associates with the U5 snRNP and NCOR1 deacetylase complexes. Identified in the spliceosome C complex. Phosphorylated by CLK1. Autophosphorylated; phosphorylation inhibits interaction with its targets, such as PRPF6 or SMARCA4.

The protein resides in the nucleus. It localises to the chromosome. The protein localises to the centromere. Its subcellular location is the kinetochore. It catalyses the reaction L-seryl-[protein] + ATP = O-phospho-L-seryl-[protein] + ADP + H(+). It carries out the reaction L-threonyl-[protein] + ATP = O-phospho-L-threonyl-[protein] + ADP + H(+). In terms of biological role, serine/threonine kinase involved in spliceosomal assembly as well as mitosis and signaling regulation. Connects chromatin mediated regulation of transcription and pre-mRNA splicing. During spliceosomal assembly, interacts with and phosphorylates PRPF6 and PRPF31, components of the U4/U6-U5 tri-small nuclear ribonucleoprotein (snRNP), to facilitate the formation of the spliceosome B complex. Plays a role in regulating transcription and the spindle assembly checkpoint (SAC). Associates with U5 snRNP and NCOR1 deacetylase complexes which may allow a coordination of pre-mRNA splicing with chromatin remodeling events involved in transcriptional regulation. Associates and probably phosphorylates SMARCA4 and NCOR1. Phosphorylates SRSF1. Associates with kinetochores during mitosis and is necessary for recruitment and maintenance of the checkpoint proteins such as MAD1L1 and MAD12L1 at the kinetochores. Phosphorylates and regulates the activity of the transcription factors such as ELK1 and KLF13. Phosphorylates nuclear YAP1 and WWTR1/TAZ which induces nuclear exclusion and regulates Hippo signaling pathway, involved in tissue growth control. The chain is Serine/threonine-protein kinase PRP4 homolog (PRP4K) from Bos taurus (Bovine).